We begin with the raw amino-acid sequence, 35 residues long: Kappa-theraphotoxin-Gr1b (35 aa).

3 disulfide bridges follow: C2/C16, C9/C21, and C15/C28. An involved in active face region spans residues 4–6; sequence YLF.

The protein belongs to the neurotoxin 10 (Hwtx-1) family. 09 (HaTx) subfamily. As to expression, expressed by the venom gland.

The protein resides in the secreted. Functionally, inhibitor of voltage-gated potassium channels. Inhibits Kv2.1/KCNB1 channels, by shifting activation of the channel to more depolarized voltages. The toxin binding sites may be situated on the S3-S4 extracellular linker of the channel. One, two, three or four toxin molecules may bind the Kv2.1/KCNB1 channel. May need to partition into the membrane in order to bind to the channel. Antibacterial activity is not observed. The polypeptide is Kappa-theraphotoxin-Gr1b (Grammostola rosea (Chilean rose tarantula)).